The sequence spans 490 residues: Serine/threonine-protein kinase PBL35 (490 aa).

2 disordered regions span residues 1–39 (MGFD…RNSE) and 80–103 (SAIV…SNAE). The stretch at 14–39 (SKTSNENEKKKKKRRRKKNNNVRNSE) forms a coiled coil. Residues 23–33 (KKKKRRRKKNN) show a composition bias toward basic residues. The span at 94–103 (SSTTTTSNAE) shows a compositional bias: low complexity. A Protein kinase domain is found at 136–422 (FRPESLLGEG…VEVLKPLPHL (287 aa)). ATP is bound by residues 142 to 150 (LGEGGFGCV) and Lys-174. Tyr-219 carries the post-translational modification Phosphotyrosine. The active-site Proton acceptor is the Asp-269. Phosphoserine occurs at positions 273 and 303. Phosphothreonine is present on residues Thr-304 and Thr-309. Residue Tyr-317 is modified to Phosphotyrosine. The tract at residues 442-490 (AGSGSGSGRGFGSRNGQPVFRTLSSPHGQAGSSPYRHQIPSPKPKGATT) is disordered. The span at 444–454 (SGSGSGRGFGS) shows a compositional bias: gly residues. Positions 463–473 (TLSSPHGQAGS) are enriched in polar residues.

It belongs to the protein kinase superfamily. Ser/Thr protein kinase family. As to quaternary structure, interacts with SD129. Post-translationally, phosphorylated by SD129 in response to the pathogen-associated molecular pattern (PAMP) 3-OH-C10:0, a medium-chain 3-hydroxy fatty acid.

The protein resides in the cell membrane. The enzyme catalyses L-seryl-[protein] + ATP = O-phospho-L-seryl-[protein] + ADP + H(+). It catalyses the reaction L-threonyl-[protein] + ATP = O-phospho-L-threonyl-[protein] + ADP + H(+). Involved in chitin-triggered immune signaling and is required for reactive oxygen species (ROS) production. Acts downstream of SD129 in defense signaling triggered by the pathogen-associated molecular pattern (PAMP) 3-OH-C10:0, a medium-chain 3-hydroxy fatty acid. The sequence is that of Serine/threonine-protein kinase PBL35 from Arabidopsis thaliana (Mouse-ear cress).